A 375-amino-acid polypeptide reads, in one-letter code: 23S rRNA (uracil(747)-C(5))-methyltransferase RlmC (375 aa).

4 residues coordinate [4Fe-4S] cluster: C3, C11, C14, and C87. Residues Q212, F241, E262, and N307 each contribute to the S-adenosyl-L-methionine site. The active-site Nucleophile is the C334.

This sequence belongs to the class I-like SAM-binding methyltransferase superfamily. RNA M5U methyltransferase family. RlmC subfamily.

It catalyses the reaction uridine(747) in 23S rRNA + S-adenosyl-L-methionine = 5-methyluridine(747) in 23S rRNA + S-adenosyl-L-homocysteine + H(+). Catalyzes the formation of 5-methyl-uridine at position 747 (m5U747) in 23S rRNA. The sequence is that of 23S rRNA (uracil(747)-C(5))-methyltransferase RlmC from Escherichia coli (strain K12 / MC4100 / BW2952).